Reading from the N-terminus, the 191-residue chain is UPF0312 protein PA0423 (191 aa).

An N-terminal signal peptide occupies residues 1-23 (MLKKTLAALALGSALFTAGQAMA).

Belongs to the UPF0312 family. Type 1 subfamily.

The protein resides in the periplasm. In Pseudomonas aeruginosa (strain ATCC 15692 / DSM 22644 / CIP 104116 / JCM 14847 / LMG 12228 / 1C / PRS 101 / PAO1), this protein is UPF0312 protein PA0423.